A 300-amino-acid chain; its full sequence is 4-hydroxy-tetrahydrodipicolinate synthase (300 aa).

Thr-45 serves as a coordination point for pyruvate. Residue Tyr-140 is the Proton donor/acceptor of the active site. Lys-169 acts as the Schiff-base intermediate with substrate in catalysis. Residue Ile-210 coordinates pyruvate.

The protein belongs to the DapA family. Homotetramer; dimer of dimers.

The protein localises to the cytoplasm. It catalyses the reaction L-aspartate 4-semialdehyde + pyruvate = (2S,4S)-4-hydroxy-2,3,4,5-tetrahydrodipicolinate + H2O + H(+). Its pathway is amino-acid biosynthesis; L-lysine biosynthesis via DAP pathway; (S)-tetrahydrodipicolinate from L-aspartate: step 3/4. Catalyzes the condensation of (S)-aspartate-beta-semialdehyde [(S)-ASA] and pyruvate to 4-hydroxy-tetrahydrodipicolinate (HTPA). In Helicobacter pylori (strain HPAG1), this protein is 4-hydroxy-tetrahydrodipicolinate synthase.